A 270-amino-acid chain; its full sequence is Undecaprenyl-diphosphatase (270 aa).

7 helical membrane-spanning segments follow: residues 3-23 (TIVTAILLGIVEGLTEFLPVS), 42-62 (WAMFNVVIQLGAILAVVVQYW), 86-106 (LLAAFIPSAILGLALKKYIDV), 108-128 (LGSPSVVCWALIAGGIAILVI), 184-204 (AEFSFFLAIPTMLGATTLELL), 217-237 (VGWSEIGVGFAVSFVVALAVI), and 249-269 (FKPFAWYRIAAGAVALGWLAM).

The protein belongs to the UppP family.

Its subcellular location is the cell inner membrane. The enzyme catalyses di-trans,octa-cis-undecaprenyl diphosphate + H2O = di-trans,octa-cis-undecaprenyl phosphate + phosphate + H(+). Its function is as follows. Catalyzes the dephosphorylation of undecaprenyl diphosphate (UPP). Confers resistance to bacitracin. The chain is Undecaprenyl-diphosphatase from Novosphingobium aromaticivorans (strain ATCC 700278 / DSM 12444 / CCUG 56034 / CIP 105152 / NBRC 16084 / F199).